Reading from the N-terminus, the 313-residue chain is Aspartate carbamoyltransferase catalytic subunit (313 aa).

Residues Arg-55 and Thr-56 each coordinate carbamoyl phosphate. Residue Lys-83 participates in L-aspartate binding. The carbamoyl phosphate site is built by Arg-105, His-138, and Gln-141. Arg-171 and Arg-225 together coordinate L-aspartate. The carbamoyl phosphate site is built by Gly-266 and Pro-267.

This sequence belongs to the aspartate/ornithine carbamoyltransferase superfamily. ATCase family. As to quaternary structure, heterododecamer (2C3:3R2) of six catalytic PyrB chains organized as two trimers (C3), and six regulatory PyrI chains organized as three dimers (R2).

The catalysed reaction is carbamoyl phosphate + L-aspartate = N-carbamoyl-L-aspartate + phosphate + H(+). It participates in pyrimidine metabolism; UMP biosynthesis via de novo pathway; (S)-dihydroorotate from bicarbonate: step 2/3. Its function is as follows. Catalyzes the condensation of carbamoyl phosphate and aspartate to form carbamoyl aspartate and inorganic phosphate, the committed step in the de novo pyrimidine nucleotide biosynthesis pathway. This is Aspartate carbamoyltransferase catalytic subunit from Corynebacterium diphtheriae (strain ATCC 700971 / NCTC 13129 / Biotype gravis).